The sequence spans 222 residues: UPF0441 protein CKO_04429 (222 aa).

The segment covering 177–194 (TVPKTAMAPKPATTTTVT) has biased composition (low complexity). The segment at 177–222 (TVPKTAMAPKPATTTTVTRGGFGESVAKQSTMQRSATGTSNRSMGG) is disordered. Positions 203-222 (AKQSTMQRSATGTSNRSMGG) are enriched in polar residues.

It belongs to the UPF0441 family.

This is UPF0441 protein CKO_04429 from Citrobacter koseri (strain ATCC BAA-895 / CDC 4225-83 / SGSC4696).